We begin with the raw amino-acid sequence, 156 residues long: Small ribosomal subunit protein uS7 (156 aa).

Belongs to the universal ribosomal protein uS7 family. In terms of assembly, part of the 30S ribosomal subunit. Contacts proteins S9 and S11.

Its function is as follows. One of the primary rRNA binding proteins, it binds directly to 16S rRNA where it nucleates assembly of the head domain of the 30S subunit. Is located at the subunit interface close to the decoding center, probably blocks exit of the E-site tRNA. In Lactobacillus helveticus (strain DPC 4571), this protein is Small ribosomal subunit protein uS7.